The chain runs to 318 residues: NADH-ubiquinone oxidoreductase chain 1 (318 aa).

Helical transmembrane passes span 2–22 (FMINLFSLIIPILLAVAFLTL), 69–89 (FMFTIAPALALTLALTMWVPL), 102–122 (MLFILAMSSLAVYSILWSGWA), 146–166 (LAIILLPTMLMNGSFTLSTLT), 171–191 (HLWLIFPLWPLAMMWFVSTLA), 231–251 (IIMMNALTAILFLGTFHNPLL), 253–273 (EAHTINLILKTSLLTICFLWV), and 294–314 (LPLTLALCMWHMSIPIMLACI).

Belongs to the complex I subunit 1 family. As to quaternary structure, core subunit of respiratory chain NADH dehydrogenase (Complex I) which is composed of 45 different subunits.

The protein resides in the mitochondrion inner membrane. It catalyses the reaction a ubiquinone + NADH + 5 H(+)(in) = a ubiquinol + NAD(+) + 4 H(+)(out). Functionally, core subunit of the mitochondrial membrane respiratory chain NADH dehydrogenase (Complex I) which catalyzes electron transfer from NADH through the respiratory chain, using ubiquinone as an electron acceptor. Essential for the catalytic activity and assembly of complex I. In Dugong dugon (Dugong), this protein is NADH-ubiquinone oxidoreductase chain 1 (MT-ND1).